We begin with the raw amino-acid sequence, 91 residues long: MTQQSNTERKPRAKGPKRPRKPKVDPFSIGELEITDYKDVKMLRRFISDTGKILPRRRTGLSAKHQRRISQTIKIARQLALLPYTEKLVRK.

Positions 1 to 27 are disordered; the sequence is MTQQSNTERKPRAKGPKRPRKPKVDPF. The span at 11–21 shows a compositional bias: basic residues; sequence PRAKGPKRPRK.

It belongs to the bacterial ribosomal protein bS18 family. In terms of assembly, part of the 30S ribosomal subunit. Forms a tight heterodimer with protein bS6.

In terms of biological role, binds as a heterodimer with protein bS6 to the central domain of the 16S rRNA, where it helps stabilize the platform of the 30S subunit. The chain is Small ribosomal subunit protein bS18 from Deinococcus geothermalis (strain DSM 11300 / CIP 105573 / AG-3a).